The chain runs to 1235 residues: Topoisomerase 1-associated factor 1 (1235 aa).

Disordered stretches follow at residues 327–357 (RERKMDNSKTFRPPRRARKPEMEPKDLGPPV), 584–610 (GEEAEDVGVPEDNDADDSGDDEQHAER), 812–841 (EGAADGEAADERSNKSAPPHITIRPDTEAR), and 897–1235 (EFSP…SDEE). The span at 585–603 (EEAEDVGVPEDNDADDSGD) shows a compositional bias: acidic residues. Over residues 929-947 (DDDEEEIRGFLGDDDDEDF) the composition is skewed to acidic residues. Positions 964-973 (QKKRQRKRRR) are enriched in basic residues. The segment covering 977-986 (SGDEEDEGVS) has biased composition (acidic residues). The span at 999–1044 (EKELEKIRKIKSEMYVHASDDETDDERDREFFERERKRQETKDSKF) shows a compositional bias: basic and acidic residues. Composition is skewed to acidic residues over residues 1070–1081 (VLDDEPESDESE) and 1099–1118 (SEEEQEEEEEEEEEEDSDEE). The span at 1124-1150 (AKSKTSKRKAAVPSKRPARRPGTAKKR) shows a compositional bias: basic residues. Acidic residues predominate over residues 1156–1170 (SDNDEDEDEEEDAMD). The span at 1193-1202 (LGRRIDKMAM) shows a compositional bias: basic and acidic residues. A compositionally biased stretch (acidic residues) spans 1203–1212 (DDGDEDEDDQ).

This sequence belongs to the timeless family. As to quaternary structure, component of the fork protection complex (FPC) consisting of tof-1 and csm-3.

It is found in the nucleus. Forms a fork protection complex (FPC) with csm-3 and which is required for chromosome segregation during meiosis and DNA damage repair. FPC coordinates leading and lagging strand synthesis and moves with the replication fork. FPC stabilizes replication forks in a configuration that is recognized by replication checkpoint sensors. The protein is Topoisomerase 1-associated factor 1 (tof-1) of Neurospora crassa (strain ATCC 24698 / 74-OR23-1A / CBS 708.71 / DSM 1257 / FGSC 987).